Reading from the N-terminus, the 430-residue chain is Chromatin assembly factor 1 p55 subunit (430 aa).

2 positions are modified to phosphoserine: serine 11 and serine 100. WD repeat units lie at residues asparagine 126 to threonine 159, glycine 179 to aspartate 210, glycine 229 to aspartate 260, alanine 275 to aspartate 306, serine 319 to aspartate 350, and glycine 376 to glutamine 407.

The protein belongs to the WD repeat RBAP46/RBAP48/MSI1 family. Probably binds directly to helix 1 of the histone fold of histone H4, a region that is not accessible when H4 is in chromatin. Self associates. Associates with chromatin. Component of the CAF-1 complex, composed of Caf1-55, Caf1-105 and Caf1-180; within the CAF-1 complex, Caf1-180 interacts directly with both Caf1-55 and Caf1-105. Component of the NuRD complex, composed of at least Caf1-55, Mi-2, MTA1-like and HDAC1/Rpd3. Within the NuRD complex, Caf1-55 may interact directly with Mi-2, MTA1-like and HDAC1/Rpd3. The NuRD complex may also associate with the methyl-DNA binding protein MBD-like via Caf1-55 and Mi-2. Component of the NURF complex, composed of Caf1-55, E(bx), Nurf-38 and Iswi. Component of the polycomb repressive complex 2 (PRC2, also known as the Esc/E(Z) complex), composed of Caf1-55, esc, E(z), Su(z)12, and possibly pho. PRC2 associates with the accessory components Jarid2 and jing to form the PRC2 Jarid2-jing variant (PRC2.2). PRC2 may also associate with Pcl and HDAC1/Rpd3 during early embryogenesis. Interacts with Rbf and Rbf2. Component of the DREAM complex at least composed of Myb, Caf1-55, mip40, mip120, mip130, E2f2, Dp, Rbf, Rbf2, lin-52, HDAC1/Rpd3 and l(3)mbt.

The protein localises to the nucleus. Functionally, core histone-binding subunit that may target chromatin assembly factors, chromatin remodeling factors and histone deacetylases to their histone substrates in a manner that is regulated by nucleosomal DNA. Component of several complexes which regulate chromatin metabolism. These include the chromatin assembly factor 1 (CAF-1) complex, which is required for chromatin assembly following DNA replication and DNA repair; the nucleosome remodeling and deacetylase complex (the NuRD complex), which promotes transcriptional repression by histone deacetylation and nucleosome remodeling; the nucleosome remodeling factor (NURF) complex, which catalyzes ATP-dependent nucleosome sliding and facilitates transcription of chromatin; and the polycomb group (PcG) repressor complex ESC-E(Z), which promotes repression of homeotic genes during development. Also required for transcriptional repression of E2F target genes by E2f2 and Rbf or Rbf2. The sequence is that of Chromatin assembly factor 1 p55 subunit from Drosophila melanogaster (Fruit fly).